Reading from the N-terminus, the 131-residue chain is Translation initiation factor 5A (131 aa).

Residue Lys-37 is modified to Hypusine.

This sequence belongs to the eIF-5A family.

The protein resides in the cytoplasm. In terms of biological role, functions by promoting the formation of the first peptide bond. The polypeptide is Translation initiation factor 5A (eIF5A) (Methanococcus vannielii (strain ATCC 35089 / DSM 1224 / JCM 13029 / OCM 148 / SB)).